A 123-amino-acid chain; its full sequence is uncharacterized protein (123 aa).

Residues 1-20 form the signal peptide; it reads MSPLIVGTLIIILLSGLATA. Residue Gly-96 is the site of GPI-anchor amidated glycine attachment. A propeptide spans 97-123 (removed in mature form); it reads SSPTTKRVIYIVMILLVLITLAVNLKH.

The protein resides in the cell membrane. This is an uncharacterized protein from Schizosaccharomyces pombe (strain 972 / ATCC 24843) (Fission yeast).